The primary structure comprises 497 residues: C4-dicarboxylate transport protein (497 aa).

8 helical membrane-spanning segments follow: residues 27-45 (LYVQ…GYFY), 60-82 (IMLV…IAGM), 95-117 (AMIY…ANVV), 168-185 (ILQV…LAIV), 205-227 (RLVA…FTIG), 237-259 (LAML…LGAV), 348-370 (ILLL…AGFI), and 374-393 (ATLS…ILGI). Residues 466 to 497 (ADRTLAGRPGGRDSRRIAPDHSAQVFGGPLSL) form a disordered region. Positions 475-484 (GGRDSRRIAP) are enriched in basic and acidic residues.

It belongs to the dicarboxylate/amino acid:cation symporter (DAACS) (TC 2.A.23) family.

It localises to the cell inner membrane. Responsible for the transport of dicarboxylates such as succinate, fumarate, and malate from the periplasm across the inner membrane. This transport system plays an essential role in the energy supply of tropical rhizobium-legume symbionts. The sequence is that of C4-dicarboxylate transport protein (dctA1) from Sinorhizobium fredii (strain NBRC 101917 / NGR234).